A 278-amino-acid chain; its full sequence is Diaminopimelate epimerase (278 aa).

Positions 11 and 63 each coordinate substrate. Catalysis depends on Cys-72, which acts as the Proton donor. Substrate contacts are provided by residues 73–74, Asn-160, Asn-193, and 211–212; these read GN and ER. The active-site Proton acceptor is Cys-220. Residue 221 to 222 participates in substrate binding; sequence GT.

Belongs to the diaminopimelate epimerase family. As to quaternary structure, homodimer.

It localises to the cytoplasm. The enzyme catalyses (2S,6S)-2,6-diaminopimelate = meso-2,6-diaminopimelate. Its pathway is amino-acid biosynthesis; L-lysine biosynthesis via DAP pathway; DL-2,6-diaminopimelate from LL-2,6-diaminopimelate: step 1/1. In terms of biological role, catalyzes the stereoinversion of LL-2,6-diaminopimelate (L,L-DAP) to meso-diaminopimelate (meso-DAP), a precursor of L-lysine and an essential component of the bacterial peptidoglycan. This chain is Diaminopimelate epimerase, found in Desulforudis audaxviator (strain MP104C).